We begin with the raw amino-acid sequence, 428 residues long: Enolase (428 aa).

Residue Gln163 coordinates (2R)-2-phosphoglycerate. Glu205 serves as the catalytic Proton donor. The Mg(2+) site is built by Asp242, Glu285, and Asp312. (2R)-2-phosphoglycerate contacts are provided by Lys337, Arg366, Ser367, and Lys388. The active-site Proton acceptor is the Lys337.

The protein belongs to the enolase family. It depends on Mg(2+) as a cofactor.

The protein resides in the cytoplasm. It localises to the secreted. The protein localises to the cell surface. The catalysed reaction is (2R)-2-phosphoglycerate = phosphoenolpyruvate + H2O. The protein operates within carbohydrate degradation; glycolysis; pyruvate from D-glyceraldehyde 3-phosphate: step 4/5. In terms of biological role, catalyzes the reversible conversion of 2-phosphoglycerate (2-PG) into phosphoenolpyruvate (PEP). It is essential for the degradation of carbohydrates via glycolysis. This Carboxydothermus hydrogenoformans (strain ATCC BAA-161 / DSM 6008 / Z-2901) protein is Enolase.